A 244-amino-acid chain; its full sequence is 14-3-3 protein beta/alpha-A (244 aa).

M1 carries the N-acetylmethionine modification.

The protein belongs to the 14-3-3 family. In terms of assembly, homodimer, and heterodimer with other family members.

The protein localises to the cytoplasm. Functionally, adapter protein implicated in the regulation of a large spectrum of both general and specialized signaling pathways. Binds to a large number of partners, usually by recognition of a phosphoserine or phosphothreonine motif. Binding generally results in the modulation of the activity of the binding partner. In Xenopus laevis (African clawed frog), this protein is 14-3-3 protein beta/alpha-A (ywhab-a).